We begin with the raw amino-acid sequence, 509 residues long: MESLVSVCAQKLVCDHSSLRRALDLMPKELYPALFKAAFLGKKTLVLQDLVQTWPFAVLSFHKLLNSNRHCDPQLATEKPSKLCVQTVILGVITYLSDALTKGPEGPQAGRQRLRLLDMTGMQEEGLEQNPDTMSLWSRTVTLAKACIDVSKRHSEEVMQVSKRRRSCHINALPASSPLYIEVRVDLFVNSTSYGVLREALLVSSHSPLRLQCRDFRAEELSLRSTAGLLELLNPGSVRQIDLRFNNLGLSGLNVLLPHMAKFSHLQSLKLPYSNVDVRRLSPVMEEGLQSFASQLGQLGALKELNLGSSRLSGRLRQLLGGLQRPLESLELAFCSLLPMDLSYLSQSSHMSSLRKLDLSGNNLSEFLLTPFLHLLAEISGHLLYLDVMECKLADAHLSALMPILCRCSWLRYLGLFCNPISSDGLRMVLQNLVRLPELHLVVYPFPVDCYSDPTHFSSTAASLDSSFDHEKLTRVGEELQQMLVRAQRMDMVWTTDMYVQRTLDSLSL.

The LRR 1; degenerate repeat unit spans residues 111 to 146 (RQRLRLLDMTGMQEEGLEQNPDTMSLWSRTVTLAKA). The LRR 2; degenerate repeat unit spans residues 210-234 (RLQCRDFRAEELSLRSTAGLLELLN). The LRR 3; degenerate repeat unit spans residues 235–262 (PGSVRQIDLRFNNLGLSGLNVLLPHMAK). An LRR 4; degenerate repeat occupies 263–298 (FSHLQSLKLPYSNVDVRRLSPVMEEGLQSFASQLGQ). LRR repeat units lie at residues 299–323 (LGAL…LGGL), 324–355 (QRPL…SSLR), 356–374 (KLDL…PFLH), 380–407 (SGHL…ILCR), and 408–432 (CSWL…VLQN).

It belongs to the PRAME family. LRRC14 subfamily.

It localises to the cytoplasm. In Xenopus laevis (African clawed frog), this protein is Leucine-rich repeat-containing protein 14.